A 109-amino-acid polypeptide reads, in one-letter code: Insulin (109 aa).

An N-terminal signal peptide occupies residues 1-24; it reads MAPWMHLLTVLALLALWGPNSVQA. 3 cysteine pairs are disulfide-bonded: C31-C93, C43-C106, and C92-C97. The propeptide at 56–84 is c peptide; the sequence is ELEDLQVEQAELGLEAGGLQPSALEMILQ.

This sequence belongs to the insulin family. As to quaternary structure, heterodimer of a B chain and an A chain linked by two disulfide bonds.

The protein resides in the secreted. Insulin decreases blood glucose concentration. It increases cell permeability to monosaccharides, amino acids and fatty acids. It accelerates glycolysis, the pentose phosphate cycle, and glycogen synthesis in liver. This Octodon degus (Degu) protein is Insulin (INS).